A 503-amino-acid chain; its full sequence is MQMEFSFSSPSFFFLLPFLFLLIKPLISRKSSLKLPPGPKKFPIVGNLFQMEGLLPHLALKKMTDKYGPICHLKLGELEAVVVSSAELAKEVLNTHAVTFADRPVTNVSKIVMYNNSGMTFARYGDYFKLLRQIYASELLSPKRVRSSSNHMEDELSKFVVKIQAETGKPIFLHDRVKSYLFAVLFDSMIGGVCKCPERYIEAAKELSANSAAMRLEDFFPSVTLLPKLSGFNTVLAKLKKEIDDLLDDLISEREKRPANATGPMEEHMLDVLLKLRNGSGSEAKIPITNEDIKAVVFELMLANLSTAATEEWAMSEMMRNPKVFKKAQDEVRRAFKGKNRICASELHKLEYLKLVIKEALRMHPPAPLLFPRKAREDCEIGGYTIPAGTMVWVNYWAVGRDPQLWHDADKFEPERFSDTSIDFNGSHSELIPFGAGRRICPGILYSATNLELLLSALLYHFDWELPSGEKPEEIDMDEFYGSGCIRKNPLALVPKVVIPCQA.

A helical membrane pass occupies residues 7–27; that stretch reads FSSPSFFFLLPFLFLLIKPLI. Cys441 serves as a coordination point for heme.

It belongs to the cytochrome P450 family. Heme serves as cofactor.

It is found in the membrane. It catalyses the reaction (19E)-geissoschizine + reduced [NADPH--hemoprotein reductase] + O2 = akuammicine + formate + oxidized [NADPH--hemoprotein reductase] + H2O + H(+). It carries out the reaction (19E)-geissoschizine + reduced [NADPH--hemoprotein reductase] + O2 = 3,17-didehydrostemmadenine + oxidized [NADPH--hemoprotein reductase] + 2 H2O. The enzyme catalyses 3,17-didehydrostemmadenine = 17-dehydropreakuammicine. It functions in the pathway alkaloid biosynthesis. Monooxygenase involved in the biosynthesis of curare monoterpene indole alkaloids (MIAs), natural products such as diaboline, a pharmacologically active compound used to regulate blood pressure. Curare alkaloids act as animal glycine receptor antagonists. Catalyzes the conversion of geissoschizine to dehydropreakuammicine by cyclization, which is spontaneously converted into akuammicine by aromatization. The sequence is that of Geissoschizine oxidase from Strychnos sp.